Consider the following 198-residue polypeptide: MEHYISLLVRSIFIENMALSFFLGMCTFLAVSKKVKTSFGLGIAVTVVLTISVPVNNLVYNLLLKPGALGENIDLTFLNFITFIGVIAALVQILEMILDRFFPPLYNALGIFLPLITVNCAIFGGVSFMVQRDYNFAESVVYGFGSGVGWMLAIVALAGIREKMKYSDVPPGLRGLGITFITAGLMALGFMSFSGVQL.

6 consecutive transmembrane segments (helical) span residues 11–31 (SIFI…FLAV), 39–59 (FGLG…NNLV), 77–97 (FLNF…LEMI), 110–130 (GIFL…SFMV), 140–160 (VVYG…LAGI), and 176–196 (LGIT…FSGV).

This sequence belongs to the NqrDE/RnfAE family. As to quaternary structure, composed of six subunits; NqrA, NqrB, NqrC, NqrD, NqrE and NqrF.

It is found in the cell inner membrane. The catalysed reaction is a ubiquinone + n Na(+)(in) + NADH + H(+) = a ubiquinol + n Na(+)(out) + NAD(+). NQR complex catalyzes the reduction of ubiquinone-1 to ubiquinol by two successive reactions, coupled with the transport of Na(+) ions from the cytoplasm to the periplasm. NqrA to NqrE are probably involved in the second step, the conversion of ubisemiquinone to ubiquinol. The sequence is that of Na(+)-translocating NADH-quinone reductase subunit E from Vibrio anguillarum (Listonella anguillarum).